Here is a 341-residue protein sequence, read N- to C-terminus: Adhesion protein Bd37 (341 aa).

The first 21 residues, 1–21, serve as a signal peptide directing secretion; the sequence is MKTSKILNTAAICLLAMGFNG. Asn23 and Asn30 each carry an N-linked (GlcNAc...) asparagine glycan. A disulfide bridge links Cys26 with Cys307. Residues 36–75 are disordered; that stretch reads AAANPVVSTPGNDAQQAGTQQGGANSKSVPEQQPQQAAGE. Residues 49 to 59 are compositionally biased toward low complexity; sequence AQQAGTQQGGA. Residues 60–75 are compositionally biased toward polar residues; sequence NSKSVPEQQPQQAAGE. Residue Ser311 is the site of GPI-anchor amidated serine attachment. A propeptide spans 312–341 (removed in mature form); the sequence is GQGSSPKKPSFAAVPSSLSAIVFGIIVSMF.

Post-translationally, the signal sequence is cleaved. Glycosylated. In terms of processing, palmitoylated. Post-translationally, not myristoylated.

It localises to the cell membrane. The protein localises to the secreted. Its subcellular location is the vesicle. Its function is as follows. Binds to host erythrocytes. The polypeptide is Adhesion protein Bd37 (Babesia divergens).